A 298-amino-acid chain; its full sequence is Cobalt-precorrin-5B C(1)-methyltransferase (298 aa).

It belongs to the CbiD family.

The catalysed reaction is Co-precorrin-5B + S-adenosyl-L-methionine = Co-precorrin-6A + S-adenosyl-L-homocysteine. It functions in the pathway cofactor biosynthesis; adenosylcobalamin biosynthesis; cob(II)yrinate a,c-diamide from sirohydrochlorin (anaerobic route): step 6/10. Its function is as follows. Catalyzes the methylation of C-1 in cobalt-precorrin-5B to form cobalt-precorrin-6A. The polypeptide is Cobalt-precorrin-5B C(1)-methyltransferase (Archaeoglobus fulgidus (strain ATCC 49558 / DSM 4304 / JCM 9628 / NBRC 100126 / VC-16)).